The chain runs to 237 residues: Ribosomal RNA small subunit methyltransferase G (237 aa).

Residues glycine 78, phenylalanine 83, 129–130, and arginine 148 contribute to the S-adenosyl-L-methionine site; that span reads AE. The disordered stretch occupies residues 218 to 237; that stretch reads KKETPNKYPRKAGMPNKRPL.

The protein belongs to the methyltransferase superfamily. RNA methyltransferase RsmG family.

The protein localises to the cytoplasm. In terms of biological role, specifically methylates the N7 position of a guanine in 16S rRNA. The sequence is that of Ribosomal RNA small subunit methyltransferase G from Streptococcus pneumoniae serotype 19F (strain G54).